The sequence spans 419 residues: Tyrosine--tRNA ligase (419 aa).

Y42 contributes to the L-tyrosine binding site. Positions 47 to 56 (ATAPSLHVGS) match the 'HIGH' region motif. The L-tyrosine site is built by Y179 and Q183. The 'KMSKS' region motif lies at 239 to 243 (KMGKT). K242 serves as a coordination point for ATP. An S4 RNA-binding domain is found at 353–418 (IVLANLFADA…GKKKIVLVKP (66 aa)).

This sequence belongs to the class-I aminoacyl-tRNA synthetase family. TyrS type 1 subfamily. Homodimer.

Its subcellular location is the cytoplasm. The enzyme catalyses tRNA(Tyr) + L-tyrosine + ATP = L-tyrosyl-tRNA(Tyr) + AMP + diphosphate + H(+). Catalyzes the attachment of tyrosine to tRNA(Tyr) in a two-step reaction: tyrosine is first activated by ATP to form Tyr-AMP and then transferred to the acceptor end of tRNA(Tyr). This Caulobacter sp. (strain K31) protein is Tyrosine--tRNA ligase.